A 332-amino-acid chain; its full sequence is Diaminopimelate epimerase (332 aa).

Asn13 and Asn73 together coordinate substrate. The active-site Proton donor is the Cys82. Substrate contacts are provided by residues 83 to 84, Asn172, Asn209, and 227 to 228; these read GN and ER. Residue Cys236 is the Proton acceptor of the active site. Substrate is bound at residue 237–238; it reads GT.

It belongs to the diaminopimelate epimerase family. In terms of assembly, homodimer.

The protein localises to the cytoplasm. It carries out the reaction (2S,6S)-2,6-diaminopimelate = meso-2,6-diaminopimelate. It participates in amino-acid biosynthesis; L-lysine biosynthesis via DAP pathway; DL-2,6-diaminopimelate from LL-2,6-diaminopimelate: step 1/1. In terms of biological role, catalyzes the stereoinversion of LL-2,6-diaminopimelate (L,L-DAP) to meso-diaminopimelate (meso-DAP), a precursor of L-lysine and an essential component of the bacterial peptidoglycan. The chain is Diaminopimelate epimerase from Lactiplantibacillus plantarum (strain ATCC BAA-793 / NCIMB 8826 / WCFS1) (Lactobacillus plantarum).